Consider the following 324-residue polypeptide: MRVVIALGGNALLKRGEPMTAEVQRQNIKIAAEAIAPIAAEHQIVVTHGNGPQVGLLALQGSAYKPEEAYPLDILGAETEGMIGYMLEQELGNVLPFEVPLATILTMVEVDGNDPGFQNPTKFVGPVYDASEAGELHQQKGWVFKQDGNKWRRVVASPIPRRIFELRPIQWLLDKGAVVICAGGGGIPTMYERGKERTLIGVEAVIDKDLCSALLARDIEADLLILATDAEAVFTGWGTPERKAIFKTNPRRLGEFSFPAGSMGPKVEAACHFVNATGRVAAIGALADIPAMVRAERGTIISSSFSDITWHVEVPIPGPASRPV.

Belongs to the carbamate kinase family.

The protein localises to the cytoplasm. The catalysed reaction is hydrogencarbonate + NH4(+) + ATP = carbamoyl phosphate + ADP + H2O + H(+). It functions in the pathway amino-acid degradation; L-arginine degradation via ADI pathway. The polypeptide is Carbamate kinase (Rhizobium meliloti (strain 1021) (Ensifer meliloti)).